A 129-amino-acid chain; its full sequence is Trefoil factor 2 (129 aa).

Positions 1–23 are cleaved as a signal peptide; the sequence is MGPRGLQLLAVLLALGLCAPAGA. Gln24 bears the Pyrrolidone carboxylic acid mark. P-type domains follow at residues 29–73 and 79–122; these read CQCS…FHPL and EQCV…FFPI. Disulfide bonds link Cys29–Cys127, Cys31–Cys58, Cys42–Cys57, Cys52–Cys69, Cys81–Cys107, Cys91–Cys106, and Cys101–Cys118.

It is found in the secreted. Inhibits gastrointestinal motility and gastric acid secretion. Could function as a structural component of gastric mucus, possibly by stabilizing glycoproteins in the mucus gel through interactions with carbohydrate side chains. This is Trefoil factor 2 (TFF2) from Canis lupus familiaris (Dog).